Here is a 647-residue protein sequence, read N- to C-terminus: Exoribonuclease 2 (647 aa).

The RNB domain occupies 191 to 517 (REDLCALPFV…VNHRLLKALI (327 aa)). Residues 563–645 (PTPFNAEIID…DTRSLIARPF (83 aa)) form the S1 motif domain.

It belongs to the RNR ribonuclease family. RNase II subfamily.

It localises to the cytoplasm. The catalysed reaction is Exonucleolytic cleavage in the 3'- to 5'-direction to yield nucleoside 5'-phosphates.. In terms of biological role, involved in mRNA degradation. Hydrolyzes single-stranded polyribonucleotides processively in the 3' to 5' direction. This chain is Exoribonuclease 2, found in Edwardsiella piscicida.